The primary structure comprises 399 residues: Elongation factor Tu (399 aa).

Positions lysine 10–lysine 209 constitute a tr-type G domain. Residues glycine 19–threonine 26 are G1. Glycine 19–threonine 26 is a binding site for GTP. Residue threonine 26 coordinates Mg(2+). The segment at glycine 60 to alanine 64 is G2. The tract at residues aspartate 81–glycine 84 is G3. GTP-binding positions include aspartate 81–histidine 85 and asparagine 136–aspartate 139. Positions asparagine 136–aspartate 139 are G4. Positions serine 174 to leucine 176 are G5.

Belongs to the TRAFAC class translation factor GTPase superfamily. Classic translation factor GTPase family. EF-Tu/EF-1A subfamily. Monomer.

Its subcellular location is the cytoplasm. The enzyme catalyses GTP + H2O = GDP + phosphate + H(+). In terms of biological role, GTP hydrolase that promotes the GTP-dependent binding of aminoacyl-tRNA to the A-site of ribosomes during protein biosynthesis. The sequence is that of Elongation factor Tu from Campylobacter hominis (strain ATCC BAA-381 / DSM 21671 / CCUG 45161 / LMG 19568 / NCTC 13146 / CH001A).